The following is a 209-amino-acid chain: Protein Bel-1 (209 aa).

Disordered regions lie at residues 1–30, 123–143, and 156–185; these read MASKYPEEGPITEGVEEDFNSHSTSGLDLT, FLNSRKESGTPKTDPTRPATS, and CSRPTPSNSESVCNGLGQPSERGHTSGESG. 2 stretches are compositionally biased toward polar residues: residues 21–30 and 132–143; these read SHSTSGLDLT and TPKTDPTRPATS.

Functionally, transcriptional transactivator that activates the viral internal promoter (IP), thereby enhancing its own expression. This transactivation is repressed by nuclear factor I. Also transactivates the long terminal repeat (LTR) promoter, thereby inducing structural gene expression, initiating the late phase of infection. It is therefore a key regulator of viral gene expression. It directly binds to and activates DNA target sites of viral promoters and those of distinct cellular genes. Required for viral replication. This Felis catus (Cat) protein is Protein Bel-1 (bel1).